A 210-amino-acid chain; its full sequence is Guanylate kinase (210 aa).

Positions 23 to 203 (GRVVVLSGPS…ACAELVSLLV (181 aa)) constitute a Guanylate kinase-like domain. Residue 30–37 (GPSAVGKS) coordinates ATP.

Belongs to the guanylate kinase family.

The protein localises to the cytoplasm. The catalysed reaction is GMP + ATP = GDP + ADP. Essential for recycling GMP and indirectly, cGMP. In Mycobacterium leprae (strain TN), this protein is Guanylate kinase (gmk).